Reading from the N-terminus, the 611-residue chain is Glutamine--fructose-6-phosphate aminotransferase [isomerizing] (611 aa).

Cysteine 2 acts as the Nucleophile; for GATase activity in catalysis. In terms of domain architecture, Glutamine amidotransferase type-2 spans cysteine 2–aspartate 219. SIS domains lie at alanine 287 to serine 427 and valine 460 to proline 601. Lysine 606 serves as the catalytic For Fru-6P isomerization activity.

Homodimer.

It localises to the cytoplasm. It carries out the reaction D-fructose 6-phosphate + L-glutamine = D-glucosamine 6-phosphate + L-glutamate. Functionally, catalyzes the first step in hexosamine metabolism, converting fructose-6P into glucosamine-6P using glutamine as a nitrogen source. This Pseudomonas syringae pv. tomato (strain ATCC BAA-871 / DC3000) protein is Glutamine--fructose-6-phosphate aminotransferase [isomerizing].